The following is a 287-amino-acid chain: Pyridoxal kinase PdxY (287 aa).

Substrate is bound by residues serine 10 and threonine 45–glutamine 46. ATP-binding positions include aspartate 112, alanine 144, glutamate 149, lysine 182, and arginine 209 to valine 212. Aspartate 224 provides a ligand contact to substrate.

Belongs to the pyridoxine kinase family. PdxY subfamily. As to quaternary structure, homodimer. It depends on Mg(2+) as a cofactor.

It catalyses the reaction pyridoxal + ATP = pyridoxal 5'-phosphate + ADP + H(+). It participates in cofactor metabolism; pyridoxal 5'-phosphate salvage; pyridoxal 5'-phosphate from pyridoxal: step 1/1. Pyridoxal kinase involved in the salvage pathway of pyridoxal 5'-phosphate (PLP). Catalyzes the phosphorylation of pyridoxal to PLP. The chain is Pyridoxal kinase PdxY from Shigella boydii serotype 4 (strain Sb227).